Reading from the N-terminus, the 333-residue chain is Glyceraldehyde-3-phosphate dehydrogenase (333 aa).

Position 1 is an N-acetylserine (Ser-1). NAD(+) is bound by residues 10–11 (RI), Asp-31, and Met-76. Residues 147 to 149 (SCT), Thr-178, 207 to 208 (TG), and Arg-230 contribute to the D-glyceraldehyde 3-phosphate site. Cys-148 (nucleophile) is an active-site residue. Asn-312 contributes to the NAD(+) binding site.

Belongs to the glyceraldehyde-3-phosphate dehydrogenase family. Homotetramer.

Its subcellular location is the cytoplasm. The catalysed reaction is D-glyceraldehyde 3-phosphate + phosphate + NAD(+) = (2R)-3-phospho-glyceroyl phosphate + NADH + H(+). It functions in the pathway carbohydrate degradation; glycolysis; pyruvate from D-glyceraldehyde 3-phosphate: step 1/5. The polypeptide is Glyceraldehyde-3-phosphate dehydrogenase (Panulirus versicolor (Painted spiny lobster)).